The following is a 409-amino-acid chain: Argininosuccinate synthase (409 aa).

ATP-binding positions include 11–19 (AYSGGLDTS) and A38. 2 residues coordinate L-citrulline: Y91 and S96. Residue G121 participates in ATP binding. Residues T123, N127, and D128 each contribute to the L-aspartate site. N127 is a binding site for L-citrulline. L-citrulline is bound by residues R131, S182, S191, E267, and Y279.

Belongs to the argininosuccinate synthase family. Type 1 subfamily. Homotetramer.

It is found in the cytoplasm. The enzyme catalyses L-citrulline + L-aspartate + ATP = 2-(N(omega)-L-arginino)succinate + AMP + diphosphate + H(+). It functions in the pathway amino-acid biosynthesis; L-arginine biosynthesis; L-arginine from L-ornithine and carbamoyl phosphate: step 2/3. This chain is Argininosuccinate synthase, found in Nitrobacter winogradskyi (strain ATCC 25391 / DSM 10237 / CIP 104748 / NCIMB 11846 / Nb-255).